The chain runs to 255 residues: Cytochrome b561 and DOMON domain-containing protein At5g48750 (255 aa).

An N-terminal signal peptide occupies residues 1–27 (MFLSSRTIFVGLCFLFVLAPCFTRATT). One can recognise a DOMON domain in the interval 54–169 (LDSFLHYSYV…TVVNHLWQDG (116 aa)). One can recognise a Cytochrome b561 domain in the interval 176-255 (RLGMHAMSGN…DPTWFYILIL (80 aa)). A helical transmembrane segment spans residues 216 to 236 (IHGLVNAVCWGIFIPIGVMAA).

The protein resides in the membrane. This is Cytochrome b561 and DOMON domain-containing protein At5g48750 from Arabidopsis thaliana (Mouse-ear cress).